The following is a 616-amino-acid chain: Chaperone protein HtpG (616 aa).

Residues M1–R333 are a; substrate-binding. Residues E334–K542 are b. The interval I543–L616 is c.

This sequence belongs to the heat shock protein 90 family. Homodimer.

It localises to the cytoplasm. In terms of biological role, molecular chaperone. Has ATPase activity. This is Chaperone protein HtpG from Borreliella burgdorferi (strain ATCC 35210 / DSM 4680 / CIP 102532 / B31) (Borrelia burgdorferi).